The sequence spans 20 residues: Short cationic peptide-4c (20 aa).

E20 carries the post-translational modification Glutamic acid 1-amide.

As to expression, expressed by the venom gland.

It is found in the secreted. This chain is Short cationic peptide-4c, found in Cupiennius salei (American wandering spider).